Here is a 394-residue protein sequence, read N- to C-terminus: Metal tolerance protein 11 (394 aa).

The Cytoplasmic portion of the chain corresponds to 1–103 (MVEPASPDSD…EQDNLAKSET (103 aa)). Residues 104–124 (LAIRISNIANMLLFAAKVYAS) form a helical membrane-spanning segment. Residues 125–130 (VTSGSL) lie on the Vacuolar side of the membrane. A helical membrane pass occupies residues 131-151 (AIIASTLDSLLDLLSGFILWF). Over 152–172 (TAFSMQTPNPYQYPIGKKRMQ) the chain is Cytoplasmic. The chain crosses the membrane as a helical span at residues 173 to 193 (PLGILVFASVMATLGLQIILE). The Vacuolar segment spans residues 194 to 212 (SLRTMLSSHKEFNLTKEQE). A helical transmembrane segment spans residues 213–233 (SWVVGIMLSVTLVKLLLVLYC). The Cytoplasmic segment spans residues 234-251 (RSFTNEIVKAYAQDHFFD). A helical membrane pass occupies residues 252–272 (VITNIIGLIAVILANYIDYWI). Residue Asp-273 is a topological domain, vacuolar. The chain crosses the membrane as a helical span at residues 274 to 294 (PVGAIILALYTIRTWSMTVLE). Residues 295–394 (NVNSLVGKSA…HKPEHARSHC (100 aa)) are Cytoplasmic-facing.

This sequence belongs to the cation diffusion facilitator (CDF) transporter (TC 2.A.4) family. SLC30A subfamily. In terms of tissue distribution, widely expressed.

The protein localises to the prevacuolar compartment membrane. It is found in the golgi apparatus membrane. Cation/proton antiporter involved in endogenous manganese tolerance probably through vesicular trafficking and exocytosis. In Arabidopsis thaliana (Mouse-ear cress), this protein is Metal tolerance protein 11 (MTP11).